Reading from the N-terminus, the 143-residue chain is Large ribosomal subunit protein uL11 (143 aa).

The protein belongs to the universal ribosomal protein uL11 family. In terms of assembly, part of the ribosomal stalk of the 50S ribosomal subunit. Interacts with L10 and the large rRNA to form the base of the stalk. L10 forms an elongated spine to which L12 dimers bind in a sequential fashion forming a multimeric L10(L12)X complex. In terms of processing, one or more lysine residues are methylated.

In terms of biological role, forms part of the ribosomal stalk which helps the ribosome interact with GTP-bound translation factors. The protein is Large ribosomal subunit protein uL11 of Phenylobacterium zucineum (strain HLK1).